The chain runs to 239 residues: tRNA (guanine-N(7)-)-methyltransferase (239 aa).

S-adenosyl-L-methionine contacts are provided by Glu69, Glu94, Asp121, and Asp144. Asp144 is an active-site residue. Substrate-binding positions include Lys148, Asp180, and 217–220 (TNFE).

The protein belongs to the class I-like SAM-binding methyltransferase superfamily. TrmB family. As to quaternary structure, monomer.

It catalyses the reaction guanosine(46) in tRNA + S-adenosyl-L-methionine = N(7)-methylguanosine(46) in tRNA + S-adenosyl-L-homocysteine. It participates in tRNA modification; N(7)-methylguanine-tRNA biosynthesis. Functionally, catalyzes the formation of N(7)-methylguanine at position 46 (m7G46) in tRNA. This Buchnera aphidicola subsp. Schizaphis graminum (strain Sg) protein is tRNA (guanine-N(7)-)-methyltransferase.